The sequence spans 76 residues: cAMP-dependent protein kinase inhibitor alpha (76 aa).

Thr-2 is subject to N-acetylthreonine. Positions 49-76 are disordered; that stretch reads KTEGEDDGQRSSTEQSGEAQGEAAKSES.

The protein belongs to the PKI family. Present at high levels in skeletal muscle and brain but is present at lower levels in heart, testis and liver.

Functionally, extremely potent competitive inhibitor of cAMP-dependent protein kinase activity, this protein interacts with the catalytic subunit of the enzyme after the cAMP-induced dissociation of its regulatory chains. The sequence is that of cAMP-dependent protein kinase inhibitor alpha (Pkia) from Mus musculus (Mouse).